The primary structure comprises 276 residues: Nuclear egress protein 2 (276 aa).

Residues 1 to 253 (MAGMGKPYGG…LFRAPRPGPP (253 aa)) are Perinuclear space-facing. The span at 212–225 (HSSGAPGPGVAASG) shows a compositional bias: low complexity. The disordered stretch occupies residues 212 to 237 (HSSGAPGPGVAASGPPAPPGRGPARP). Residues 254–274 (ALLLLAAGLFLGAAIWWAVGA) form a helical membrane-spanning segment. At 275–276 (RL) the chain is on the nuclear side.

Belongs to the herpesviridae NEC2 protein family. Forms a heterohexameric complex with NEC1. Post-translationally, phosphorylated.

Its subcellular location is the host nucleus inner membrane. In terms of biological role, plays an essential role in virion nuclear egress, the first step of virion release from infected cell. Within the host nucleus, NEC1 interacts with the newly formed capsid through the vertexes and directs it to the inner nuclear membrane by associating with NEC2. Induces the budding of the capsid at the inner nuclear membrane as well as its envelopment into the perinuclear space. There, the NEC1/NEC2 complex promotes the fusion of the enveloped capsid with the outer nuclear membrane and the subsequent release of the viral capsid into the cytoplasm where it will reach the secondary budding sites in the host Golgi or trans-Golgi network. This Homo sapiens (Human) protein is Nuclear egress protein 2.